The primary structure comprises 853 residues: Cytochrome P450 monooxygenase mpaDE' (853 aa).

Residues 1-6 (MESLSL) are Lumenal-facing. The helical transmembrane segment at 7-29 (TWITAIAVVLYLVQRYVRSYWRL) threads the bilayer. Residues 30 to 853 (KDIPGPVLAK…DIENAIEGQK (824 aa)) lie on the Cytoplasmic side of the membrane. Cys-449 lines the heme pocket.

This sequence belongs to the cytochrome P450 family. Heme is required as a cofactor.

Its subcellular location is the endoplasmic reticulum membrane. The catalysed reaction is 5-methylorsellinate + reduced [NADPH--hemoprotein reductase] + O2 = 4,6-dihydroxy-2-(hydroxymethyl)-3-methylbenzoate + oxidized [NADPH--hemoprotein reductase] + H2O + H(+). It catalyses the reaction 4,6-dihydroxy-2-(hydroxymethyl)-3-methylbenzoate + H(+) = 5,7-dihydroxy-4-methylphthalide + H2O. It functions in the pathway secondary metabolite biosynthesis; terpenoid biosynthesis. Functionally, cytochrome P450 monooxygenase; part of the gene cluster that mediates the biosynthesis of mycophenolic acid (MPA), the first isolated antibiotic natural product in the world obtained from a culture of Penicillium brevicompactum in 1893. MpaDE' is an endoplasmic reticulum-bound enzyme that catalyzes the conversion of 5-methylorsellinic acid (5MOA) into the phthalide compound 5,7-dihydroxy-4,6-dimethylphthalide (DHMP). MpaDE' first catalyzes hydroxylation of 5-MOA to 4,6-dihydroxy-2-(hydroxymethyl)-3-methylbenzoic acid (DHMB), and then acts as a lactone synthase that catalyzes the ring closure to convert DHMB into DHMP. The first step of the pathway is the synthesis of 5-methylorsellinic acid (5MOA) by the cytosolic polyketide synthase mpaC. 5MOA is then converted to the phthalide compound 5,7-dihydroxy-4,6-dimethylphthalide (DHMP) by the endoplasmic reticulum-bound cytochrome P450 monooxygenase mpaDE. MpaDE first catalyzes hydroxylation of 5-MOA to 4,6-dihydroxy-2-(hydroxymethyl)-3-methylbenzoic acid (DHMB). MpaDE then acts as a lactone synthase that catalyzes the ring closure to convert DHMB into DHMP. The next step is the prenylation of DHMP by the Golgi apparatus-associated prenyltransferase mpaA to yield farnesyl-DHMP (FDHMP). The ER-bound oxygenase mpaB then mediates the oxidative cleavage the C19-C20 double bond in FDHMP to yield FDHMP-3C via a mycophenolic aldehyde intermediate. The O-methyltransferase mpaG catalyzes the methylation of FDHMP-3C to yield MFDHMP-3C. After the cytosolic methylation of FDHMP-3C, MFDHMP-3C enters into peroxisomes probably via free diffusion due to its low molecular weight. Upon a peroxisomal CoA ligation reaction, catalyzed by a beta-oxidation component enzyme acyl-CoA ligase ACL891, MFDHMP-3C-CoA would then be restricted to peroxisomes for the following beta-oxidation pathway steps. The peroxisomal beta-oxidation machinery than converts MFDHMP-3C-CoA into MPA_CoA, via a beta-oxidation chain-shortening process. Finally mpaH acts as a peroxisomal acyl-CoA hydrolase with high substrate specificity toward MPA-CoA to release the final product MPA. This is Cytochrome P450 monooxygenase mpaDE' from Penicillium brevicompactum.